A 242-amino-acid chain; its full sequence is MFHNLLGKNKIFSHHDRYVNDYIINVKDLSFAYAKKKVIDNVSFQVKFGEIITILGPNGGGKTTLIRILVGIYKNYLGIVEYAKNFVIGYLPQNFSVNSLIPMTVEYFLVSSYTKQRKKLNLNSVLKDVNVVKILNRQMSEISHGELQLVLLARCLMLNPDIIILDEPVSCMDINAKDSFYKLINQLILRYNLSVIMTSHDLHFVMANSYRVICINKSIYCEGSPSEIVKNEKFLKMFSSYA.

The ABC transporter domain occupies 24-241 (INVKDLSFAY…EKFLKMFSSY (218 aa)). 56-63 (GPNGGGKT) contacts ATP.

The protein belongs to the ABC transporter superfamily. Zinc importer (TC 3.A.1.15.5) family. The complex is composed of two ATP-binding proteins (ZnuC), two transmembrane proteins (ZnuB) and a solute-binding protein (ZnuA).

It localises to the cell inner membrane. It carries out the reaction Zn(2+)(out) + ATP(in) + H2O(in) = Zn(2+)(in) + ADP(in) + phosphate(in) + H(+)(in). Its function is as follows. Part of the ABC transporter complex ZnuABC involved in zinc import. Responsible for energy coupling to the transport system. This Ehrlichia ruminantium (strain Gardel) protein is Zinc import ATP-binding protein ZnuC.